We begin with the raw amino-acid sequence, 1070 residues long: MFTIYKSNSLNTLLLKAYHIIEEKPFSNIFEKEIFIYDNKVLFQYLNIFIAEKKGISANFKFYHPNDFIWKLFKIILSKKELKNIFTHSMIIWEIIKILDNKKFFENCSKKKDMIKKFKFSFLMASIFKKYILYRPEWINQWEIEKNISIFDKNEQWQIKLWMEIIHNTKKINQSSDHFANLFYNIQKIIKEKKIKKKYLPKRFFIISSFSMNPSYIKIFQNISIYTDIYFLYITPFKKNIFNFIQDNKIFTDIKIEKKNILNDSLITLWGQYEEIYYFYILKSKKNKVINCFKKNKNKSLLSQIKNNFFNDSEFTRKKRFLEISDHSISINICFNKKNEIEVLYEKLLIFLNENSSIKPGDIVVTSFSLDTYISSINLIFQSIDNKKTIPFFIAKKSSKTTEIMLWSFKKILNLSNSRFENEEILELLDVPEIAEKFNFSEEEIKILYHWIEETNIRWGINEKHKNYLLFPKNKQNTWFYGIEKLLLSYAMNDTEKIWNGVLSCSFINGSRSELIGKLISFIKILEKWQKKLSKLQYLTYWRSLYSDLVSDFFQNNTKIEKSIQIIQKKWIEIIDDSLSSNYLKKISINILKKIFFYKYYDNNHEIFLPGVVNFCYPDSVCYIPFKVICMIGTDHTSIPKTNYLDNFNLLKKYPLIGDINLYQKYSYLFVQSLSCAEKYFYISYIGYSVKDESKVHPSILVDQLLNYITLNFCFIGDQNLSYKENSKKITKYLCKKHKKQFFYETKNIESFIQDDIKNDFKHTEKNISHKNLLKKNTDNEINLKDLINFWKHPIRYFYNSHLKIKIRQKKQKINTTETFLVNPLNSFKIKNKLLDYIIHNKNITKLYQHYLLSGKLPYHFFGEIFWIKNIKEMKLIANKVMQYRIEKEEKKINLNIEKYQIYGVLSEIQSTGLLRWKTSSIRYSDRIALWLEHLIYSILGGCGKSKIIGYKSQIWSFSSLNSHRAHSYLLEYIKGYIKGMKEPLFLTKSGASWLDQVYDERNNCIKNDYYTKIKAYKKLLYTWKGDNYTEGEQEDYYLKKTITISNKKNIKKICESAEKWLIPILKNKG.

It belongs to the RecC family. In terms of assembly, heterotrimer of RecB, RecC and RecD. All subunits contribute to DNA-binding.

A helicase/nuclease that prepares dsDNA breaks (DSB) for recombinational DNA repair. Binds to DSBs and unwinds DNA via a highly rapid and processive ATP-dependent bidirectional helicase activity. Unwinds dsDNA until it encounters a Chi (crossover hotspot instigator) sequence from the 3' direction. Cuts ssDNA a few nucleotides 3' to the Chi site. The properties and activities of the enzyme are changed at Chi. The Chi-altered holoenzyme produces a long 3'-ssDNA overhang and facilitates RecA-binding to the ssDNA for homologous DNA recombination and repair. Holoenzyme degrades any linearized DNA that is unable to undergo homologous recombination. In the holoenzyme this subunit recognizes the wild-type Chi sequence, and when added to isolated RecB increases its ATP-dependent helicase processivity. The chain is RecBCD enzyme subunit RecC from Buchnera aphidicola subsp. Acyrthosiphon pisum (strain APS) (Acyrthosiphon pisum symbiotic bacterium).